A 240-amino-acid chain; its full sequence is MLHVVPLEWTVEEVVPYLERLAVWLRASVLVAFQLTATVALSVLSWWLMPPPVAELCERGRDDDPPPLSHLSLVVPVGCLFLLLRGPSIDRCPRKLPLLLAYCLPHALAFLTLLMCQPSPQAFVGAALLALAVDLSCLGASLLGCDPGASLRRLWLPSVLSLLCATALGLWLLRAAAPFFLGLHATTLLTVTLMLIHDLSLITCQSSFPESFQPSLRLYVENVALFIGMYHLLRLWLWSP.

The next 7 membrane-spanning stretches (helical) occupy residues 29–49 (VLVA…WWLM), 64–84 (DPPP…FLLL), 96–116 (LPLL…LLMC), 123–143 (FVGA…ASLL), 154–174 (LWLP…WLLR), 176–196 (AAPF…LMLI), and 218–238 (LYVE…LWLW).

Belongs to the cytomegalovirus US12 family.

The protein resides in the membrane. This Homo sapiens (Human) protein is Transmembrane protein HWLF4 (US19).